We begin with the raw amino-acid sequence, 218 residues long: 7-cyano-7-deazaguanine synthase (218 aa).

An ATP-binding site is contributed by 11–21 (LSGGMDSATLL). Zn(2+) is bound by residues C193, C201, C204, and C207.

This sequence belongs to the QueC family. It depends on Zn(2+) as a cofactor.

The catalysed reaction is 7-carboxy-7-deazaguanine + NH4(+) + ATP = 7-cyano-7-deazaguanine + ADP + phosphate + H2O + H(+). The protein operates within purine metabolism; 7-cyano-7-deazaguanine biosynthesis. Its function is as follows. Catalyzes the ATP-dependent conversion of 7-carboxy-7-deazaguanine (CDG) to 7-cyano-7-deazaguanine (preQ(0)). The polypeptide is 7-cyano-7-deazaguanine synthase (Aquifex aeolicus (strain VF5)).